A 180-amino-acid chain; its full sequence is Hypoxanthine-guanine phosphoribosyltransferase (180 aa).

Residues Lys43 and Gly44 each contribute to the diphosphate site. Mg(2+) is bound by residues Glu99 and Asp100. Asp103 (proton acceptor) is an active-site residue. GMP contacts are provided by residues Lys131, 152 to 153, and Asp159; that span reads FI. Arg165 contacts diphosphate.

Belongs to the purine/pyrimidine phosphoribosyltransferase family. It depends on Mg(2+) as a cofactor.

The protein localises to the cytoplasm. It carries out the reaction IMP + diphosphate = hypoxanthine + 5-phospho-alpha-D-ribose 1-diphosphate. The enzyme catalyses GMP + diphosphate = guanine + 5-phospho-alpha-D-ribose 1-diphosphate. Its pathway is purine metabolism; IMP biosynthesis via salvage pathway; IMP from hypoxanthine: step 1/1. It functions in the pathway purine metabolism; GMP biosynthesis via salvage pathway; GMP from guanine: step 1/1. Functionally, purine salvage pathway enzyme that catalyzes the transfer of the ribosyl-5-phosphate group from 5-phospho-alpha-D-ribose 1-diphosphate (PRPP) to the N9 position of the 6-oxopurines hypoxanthine and guanine to form the corresponding ribonucleotides IMP (inosine 5'-monophosphate) and GMP (guanosine 5'-monophosphate), with the release of PPi. In Streptococcus thermophilus (strain CNRZ 1066), this protein is Hypoxanthine-guanine phosphoribosyltransferase (hpt).